The primary structure comprises 577 residues: Zinc finger-containing ubiquitin peptidase 1 (577 aa).

The C2H2-type 1 zinc-finger motif lies at 2-24; that stretch reads LSCNICGETVNSEPDMKAHLIVH. A C2H2-type 2; atypical zinc finger spans residues 29–52; that stretch reads IICPFCKLSGINYNEICFHIETVH. Residues 124–137 are compositionally biased toward basic and acidic residues; sequence ESRKYQKSREKKPG. Residues 124-145 are disordered; that stretch reads ESRKYQKSREKKPGLSEAQGSI. A C2H2-type 3; atypical zinc finger spans residues 153 to 176; sequence PECPFCGKIEGCSQDMEIHVKTKH. The C2H2-type 4 zinc-finger motif lies at 192–214; that stretch reads YDCPMCGLVCTNYHILQEHVDLH. The interval 225–247 is MIU; sequence DRVQCSSDRELAHRLQQEEDRKR. Positions 238 to 260 are disordered; it reads RLQQEEDRKRKSEESRQEREEFQ. Residues 248-273 are zUBD/ZHA; that stretch reads KSEESRQEREEFQKLQRQYGLDNSGG. Position 261 is an N6-acetyllysine (Lys-261). Cys-359 acts as the Nucleophile in catalysis. His-490 functions as the Proton acceptor in the catalytic mechanism. Asp-511 is a catalytic residue.

Belongs to the peptidase C78 family. ZUFSP subfamily. As to quaternary structure, interacts with RPA1 and RPA2.

The protein resides in the cytoplasm. It localises to the nucleus. The enzyme catalyses Thiol-dependent hydrolysis of ester, thioester, amide, peptide and isopeptide bonds formed by the C-terminal Gly of ubiquitin (a 76-residue protein attached to proteins as an intracellular targeting signal).. Deubiquitinase with endodeubiquitinase activity that specifically interacts with and cleaves 'Lys-63'-linked long polyubiquitin chains. Shows only weak activity against 'Lys-11' and 'Lys-48'-linked chains. Plays an important role in genome stability pathways, functioning to prevent spontaneous DNA damage and also promote cellular survival in response to exogenous DNA damage. Modulates the ubiquitination status of replication protein A (RPA) complex proteins in response to replication stress. This chain is Zinc finger-containing ubiquitin peptidase 1, found in Mus musculus (Mouse).